Consider the following 424-residue polypeptide: Putative fasciclin-like arabinogalactan protein 20 (424 aa).

A helical membrane pass occupies residues 46-66 (LLTTFFLIFFVLDIDLVATSM). An FAS1 1 domain is found at 56–194 (VLDIDLVATS…YVVIYGSDEF (139 aa)). Asn-153 and Asn-160 each carry an N-linked (GlcNAc...) asparagine glycan. The span at 199-226 (TKISDDSSSSSSIPSTTSSTGSIPIPSS) shows a compositional bias: low complexity. The segment at 199–246 (TKISDDSSSSSSIPSTTSSTGSIPIPSSATQTPPSPNIASDSTRNLPN) is disordered. The span at 227-246 (ATQTPPSPNIASDSTRNLPN) shows a compositional bias: polar residues. N-linked (GlcNAc...) asparagine glycosylation is found at Asn-246, Asn-283, and Asn-287. In terms of domain architecture, FAS1 2 spans 250 to 384 (PVNRFNIFES…IAVHGFNQMI (135 aa)). Positions 405–424 (QEEEGVHGEYSSELGDYGLH) are disordered.

Belongs to the fasciclin-like AGP family.

It localises to the membrane. Its function is as follows. May be a cell surface adhesion protein. This is Putative fasciclin-like arabinogalactan protein 20 (FLA20) from Arabidopsis thaliana (Mouse-ear cress).